Here is a 242-residue protein sequence, read N- to C-terminus: ATP synthase subunit a (242 aa).

Helical transmembrane passes span I31–W51, F84–T104, I114–V134, F140–I160, V189–M209, and V210–L230.

The protein belongs to the ATPase A chain family. In terms of assembly, F-type ATPases have 2 components, CF(1) - the catalytic core - and CF(0) - the membrane proton channel. CF(1) has five subunits: alpha(3), beta(3), gamma(1), delta(1), epsilon(1). CF(0) has three main subunits: a(1), b(2) and c(9-12). The alpha and beta chains form an alternating ring which encloses part of the gamma chain. CF(1) is attached to CF(0) by a central stalk formed by the gamma and epsilon chains, while a peripheral stalk is formed by the delta and b chains.

It is found in the cell inner membrane. Its function is as follows. Key component of the proton channel; it plays a direct role in the translocation of protons across the membrane. The chain is ATP synthase subunit a from Rickettsia canadensis (strain McKiel).